The following is a 131-amino-acid chain: Large ribosomal subunit protein uL14m (131 aa).

This sequence belongs to the universal ribosomal protein uL14 family. As to quaternary structure, component of the mitochondrial large ribosomal subunit (mt-LSU). Mature N.crassa 74S mitochondrial ribosomes consist of a small (37S) and a large (54S) subunit. The 37S small subunit contains a 16S ribosomal RNA (16S mt-rRNA) and 32 different proteins. The 54S large subunit contains a 23S rRNA (23S mt-rRNA) and 42 different proteins.

It localises to the mitochondrion. Component of the mitochondrial ribosome (mitoribosome), a dedicated translation machinery responsible for the synthesis of mitochondrial genome-encoded proteins, including at least some of the essential transmembrane subunits of the mitochondrial respiratory chain. The mitoribosomes are attached to the mitochondrial inner membrane and translation products are cotranslationally integrated into the membrane. This is Large ribosomal subunit protein uL14m (mrpl38) from Neurospora crassa (strain ATCC 24698 / 74-OR23-1A / CBS 708.71 / DSM 1257 / FGSC 987).